We begin with the raw amino-acid sequence, 434 residues long: Putative ankyrin repeat protein FPV023 (434 aa).

ANK repeat units lie at residues Arg-33–Ala-62, Leu-134–Phe-163, Ile-167–Ile-197, Tyr-201–Ser-230, Ile-236–Ile-265, Ala-269–Ile-299, and Asn-303–Ile-330.

The chain is Putative ankyrin repeat protein FPV023 from Fowlpox virus (strain NVSL) (FPV).